The primary structure comprises 703 residues: MSLLKERKPKKPHYIPRPPGKPFKYKCFQCPFTCNEKSHLFNHMKYGLCKNSITLVSEQDRVPKCSKPNSSDPKQTNQPDPVVKPTSSKPVPSGLSHLDAKLQHSLAKDDIKENLDLHARGPHRCLGQKPTPHKEAAPPSPAPEAAVGTQPVLEGAVRPSAFVPVGEHRLKGQELTETPEALALTHAPAKASSFHTKSAFHAPGYPWRAGSPFLTPEFPHKIPSTKGFGATSPYVHPSITEYPPHFYTEHGLATIYSPYLLAGNSPECDSPLLSVYGAQDQRHFLPHPGPIPKHLNPAPSTYDHYRFFQQYHSSLPIPYGFYRPESAFSSYGLRLPPVAGISRDQSSHLLEEAALGYQALSPSKLNSSNSHKKHTELEKQSPTPEAKEPSKDGQRDTEGTKMSPRAGSAATGSPGRPSPTNFTQTSQPCAGLCGLSDAPASSAPGRIPPPEQGLAAFKPIKKNTEHPHSQAPENRAVSPKSLEALSTDAPTQLGSLEAAPSSPEDGSRAAPLNLSTKPEAEPAATCSPAHGGFVEPQDAPLNLSVKDPCNALTSRPSVCSPPRGAEPAAAPTPSPTQQREPASSGDGPDPSSVEAPVPSPTGKAQDIRAADSDEQKQTAAVALCQLAAYSPGNVEPAAQEPTCRPDAPTPRAPESQEAQCDLRPKGQKRTSPREVGKGQQGSKKAKPSDTARVFTLRKRTRVS.

The segment at 25-51 (YKCFQCPFTCNEKSHLFNHMKYGLCKN) adopts a CCHC-type zinc-finger fold. Zn(2+) is bound by residues Cys27, Cys30, His43, and Cys49. Disordered regions lie at residues 60–96 (DRVP…SGLS), 121–147 (GPHR…EAAV), 362–617 (PSKL…EQKQ), and 633–703 (NVEP…TRVS). A compositionally biased stretch (polar residues) spans 67 to 78 (KPNSSDPKQTNQ). The segment covering 79–93 (PDPVVKPTSSKPVPS) has biased composition (low complexity). Basic and acidic residues predominate over residues 375 to 399 (TELEKQSPTPEAKEPSKDGQRDTEG). Over residues 418–428 (SPTNFTQTSQP) the composition is skewed to polar residues. A compositionally biased stretch (low complexity) spans 583–592 (SSGDGPDPSS). Residues 605–616 (QDIRAADSDEQK) show a composition bias toward basic and acidic residues.

It localises to the nucleus. Functionally, transcription factor involved in epidermis differentiation. Required for terminal epidermal differentiation: acts downstream of p63/TP63 and activates expression of late epidermal differentiation genes. Specifically binds to the promoter of KLF4 and promotes its expression. This chain is Zinc finger protein 750 (ZNF750), found in Bos taurus (Bovine).